Consider the following 146-residue polypeptide: Late protein H7 (146 aa).

Residues 10–32 (LAMTAFFGELNTLDIMALIMSIF) form a helical membrane-spanning segment.

Belongs to the chordopoxvirinae H7 family.

It localises to the membrane. Its function is as follows. Contributes to the formation of crescents and immature virions (IV). The protein is Late protein H7 of Vaccinia virus (strain Tian Tan) (VACV).